A 98-amino-acid polypeptide reads, in one-letter code: Large ribosomal subunit protein bL28 (98 aa).

This sequence belongs to the bacterial ribosomal protein bL28 family.

This chain is Large ribosomal subunit protein bL28, found in Beijerinckia indica subsp. indica (strain ATCC 9039 / DSM 1715 / NCIMB 8712).